The chain runs to 1070 residues: DNA-directed RNA polymerase subunit beta (1070 aa).

This sequence belongs to the RNA polymerase beta chain family. As to quaternary structure, in plastids the minimal PEP RNA polymerase catalytic core is composed of four subunits: alpha, beta, beta', and beta''. When a (nuclear-encoded) sigma factor is associated with the core the holoenzyme is formed, which can initiate transcription.

The protein localises to the plastid. The protein resides in the chloroplast. The catalysed reaction is RNA(n) + a ribonucleoside 5'-triphosphate = RNA(n+1) + diphosphate. DNA-dependent RNA polymerase catalyzes the transcription of DNA into RNA using the four ribonucleoside triphosphates as substrates. This is DNA-directed RNA polymerase subunit beta from Nandina domestica (Heavenly bamboo).